The chain runs to 356 residues: Histidinol-phosphate aminotransferase (356 aa).

The residue at position 213 (Lys213) is an N6-(pyridoxal phosphate)lysine.

The protein belongs to the class-II pyridoxal-phosphate-dependent aminotransferase family. Histidinol-phosphate aminotransferase subfamily. As to quaternary structure, homodimer. Pyridoxal 5'-phosphate is required as a cofactor.

The enzyme catalyses L-histidinol phosphate + 2-oxoglutarate = 3-(imidazol-4-yl)-2-oxopropyl phosphate + L-glutamate. Its pathway is amino-acid biosynthesis; L-histidine biosynthesis; L-histidine from 5-phospho-alpha-D-ribose 1-diphosphate: step 7/9. This is Histidinol-phosphate aminotransferase from Clostridium novyi (strain NT).